A 428-amino-acid polypeptide reads, in one-letter code: C4-dicarboxylate transport protein (428 aa).

The next 9 membrane-spanning stretches (helical) occupy residues 4–24, 44–64, 76–96, 142–162, 184–204, 222–242, 289–309, 326–346, and 352–372; these read SLFKSLYFQVLTAIAIGILLG, LIKMIIAPVIFCTVVTGIAGM, VALLYFEIVSTIALIIGLIIV, IGAFASGNILQVLLFAVLFGF, VIFGIINMIMRLAPIGAFGAM, LIICFYITCILFVVVVLGTIA, VVGLVIPTGYSFNLDGTSIYL, IFHQITLLVVLLLSSKGAAGV, and IVLAATISAVGHLPVAGLALI.

This sequence belongs to the dicarboxylate/amino acid:cation symporter (DAACS) (TC 2.A.23) family.

Its subcellular location is the cell inner membrane. Its function is as follows. Responsible for the transport of dicarboxylates such as succinate, fumarate, and malate from the periplasm across the membrane. The sequence is that of C4-dicarboxylate transport protein from Salmonella gallinarum (strain 287/91 / NCTC 13346).